Consider the following 305-residue polypeptide: Protoheme IX farnesyltransferase (305 aa).

Helical transmembrane passes span Val31–His51, Pro52–Ile72, Val96–Ala118, Leu123–Lys145, Asn151–Ser171, Ile179–Phe199, Ile225–Asn245, Phe247–Leu267, and Phe281–Ile301.

The protein belongs to the UbiA prenyltransferase family. Protoheme IX farnesyltransferase subfamily.

Its subcellular location is the cell inner membrane. The catalysed reaction is heme b + (2E,6E)-farnesyl diphosphate + H2O = Fe(II)-heme o + diphosphate. It participates in porphyrin-containing compound metabolism; heme O biosynthesis; heme O from protoheme: step 1/1. Functionally, converts heme B (protoheme IX) to heme O by substitution of the vinyl group on carbon 2 of heme B porphyrin ring with a hydroxyethyl farnesyl side group. This Rickettsia massiliae (strain Mtu5) protein is Protoheme IX farnesyltransferase.